We begin with the raw amino-acid sequence, 763 residues long: Heat shock 70 kDa protein 16 (763 aa).

Disordered stretches follow at residues 509 to 529 (ISEE…PSSG) and 701 to 763 (EKTT…MELD). Ser528 is modified (phosphoserine). Basic and acidic residues predominate over residues 701 to 714 (EKTTEQESLPKDAN).

This sequence belongs to the heat shock protein 70 (TC 1.A.33) family. HSP110/SSE subfamily.

This chain is Heat shock 70 kDa protein 16 (HSP70-16), found in Arabidopsis thaliana (Mouse-ear cress).